The chain runs to 397 residues: tRNA-specific 2-thiouridylase MnmA (397 aa).

Residues 6-13 (AMSGGVDS) and Leu-32 each bind ATP. The active-site Nucleophile is Cys-101. Residues Cys-101 and Cys-199 are joined by a disulfide bond. An ATP-binding site is contributed by Gly-125. The interval 148-150 (KDQ) is interaction with tRNA. Cys-199 acts as the Cysteine persulfide intermediate in catalysis.

Belongs to the MnmA/TRMU family.

It is found in the cytoplasm. The enzyme catalyses S-sulfanyl-L-cysteinyl-[protein] + uridine(34) in tRNA + AH2 + ATP = 2-thiouridine(34) in tRNA + L-cysteinyl-[protein] + A + AMP + diphosphate + H(+). In terms of biological role, catalyzes the 2-thiolation of uridine at the wobble position (U34) of tRNA, leading to the formation of s(2)U34. This Clavibacter sepedonicus (Clavibacter michiganensis subsp. sepedonicus) protein is tRNA-specific 2-thiouridylase MnmA.